A 425-amino-acid polypeptide reads, in one-letter code: Serine--tRNA ligase (425 aa).

228–230 (TAE) lines the L-serine pocket. Position 259–261 (259–261 (RSE)) interacts with ATP. Glu-282 contributes to the L-serine binding site. 346–349 (EIAS) serves as a coordination point for ATP. Ser-382 contacts L-serine.

It belongs to the class-II aminoacyl-tRNA synthetase family. Type-1 seryl-tRNA synthetase subfamily. In terms of assembly, homodimer. The tRNA molecule binds across the dimer.

Its subcellular location is the cytoplasm. The enzyme catalyses tRNA(Ser) + L-serine + ATP = L-seryl-tRNA(Ser) + AMP + diphosphate + H(+). The catalysed reaction is tRNA(Sec) + L-serine + ATP = L-seryl-tRNA(Sec) + AMP + diphosphate + H(+). It participates in aminoacyl-tRNA biosynthesis; selenocysteinyl-tRNA(Sec) biosynthesis; L-seryl-tRNA(Sec) from L-serine and tRNA(Sec): step 1/1. Catalyzes the attachment of serine to tRNA(Ser). Is also able to aminoacylate tRNA(Sec) with serine, to form the misacylated tRNA L-seryl-tRNA(Sec), which will be further converted into selenocysteinyl-tRNA(Sec). The sequence is that of Serine--tRNA ligase from Rickettsia massiliae (strain Mtu5).